The chain runs to 173 residues: Peptide methionine sulfoxide reductase MsrA (173 aa).

Residue C10 is part of the active site.

It belongs to the MsrA Met sulfoxide reductase family.

The enzyme catalyses L-methionyl-[protein] + [thioredoxin]-disulfide + H2O = L-methionyl-(S)-S-oxide-[protein] + [thioredoxin]-dithiol. The catalysed reaction is [thioredoxin]-disulfide + L-methionine + H2O = L-methionine (S)-S-oxide + [thioredoxin]-dithiol. In terms of biological role, has an important function as a repair enzyme for proteins that have been inactivated by oxidation. Catalyzes the reversible oxidation-reduction of methionine sulfoxide in proteins to methionine. In Psychrobacter cryohalolentis (strain ATCC BAA-1226 / DSM 17306 / VKM B-2378 / K5), this protein is Peptide methionine sulfoxide reductase MsrA.